The chain runs to 157 residues: UPF0262 protein Rleg2_0240 (157 aa).

The protein belongs to the UPF0262 family.

The chain is UPF0262 protein Rleg2_0240 from Rhizobium leguminosarum bv. trifolii (strain WSM2304).